A 517-amino-acid chain; its full sequence is 2-isopropylmalate synthase (517 aa).

The region spanning 5 to 268 (IIIFDTTLRD…DTRINTQEIH (264 aa)) is the Pyruvate carboxyltransferase domain. Residues D14, H202, H204, and N238 each contribute to the Mn(2+) site. Positions 393–517 (SLDVITSQTI…ADLKSHKISQ (125 aa)) are regulatory domain.

Belongs to the alpha-IPM synthase/homocitrate synthase family. LeuA type 1 subfamily. As to quaternary structure, homodimer. Mn(2+) is required as a cofactor.

It is found in the cytoplasm. It carries out the reaction 3-methyl-2-oxobutanoate + acetyl-CoA + H2O = (2S)-2-isopropylmalate + CoA + H(+). It functions in the pathway amino-acid biosynthesis; L-leucine biosynthesis; L-leucine from 3-methyl-2-oxobutanoate: step 1/4. Functionally, catalyzes the condensation of the acetyl group of acetyl-CoA with 3-methyl-2-oxobutanoate (2-ketoisovalerate) to form 3-carboxy-3-hydroxy-4-methylpentanoate (2-isopropylmalate). The sequence is that of 2-isopropylmalate synthase from Histophilus somni (strain 129Pt) (Haemophilus somnus).